Here is a 243-residue protein sequence, read N- to C-terminus: Carboxy-S-adenosyl-L-methionine synthase (243 aa).

Residues Tyr40, 65-67 (GCS), 90-91 (DN), 118-119 (DI), Asn133, and Arg200 contribute to the S-adenosyl-L-methionine site.

The protein belongs to the class I-like SAM-binding methyltransferase superfamily. Cx-SAM synthase family. In terms of assembly, homodimer.

It carries out the reaction prephenate + S-adenosyl-L-methionine = carboxy-S-adenosyl-L-methionine + 3-phenylpyruvate + H2O. Its function is as follows. Catalyzes the conversion of S-adenosyl-L-methionine (SAM) to carboxy-S-adenosyl-L-methionine (Cx-SAM). The sequence is that of Carboxy-S-adenosyl-L-methionine synthase from Shewanella pealeana (strain ATCC 700345 / ANG-SQ1).